Here is a 188-residue protein sequence, read N- to C-terminus: Small ribosomal subunit protein uS7 (188 aa).

Belongs to the universal ribosomal protein uS7 family. In terms of assembly, part of the 30S ribosomal subunit.

Functionally, one of the primary rRNA binding proteins, it binds directly to 16S rRNA where it nucleates assembly of the head domain of the 30S subunit. Is located at the subunit interface close to the decoding center. In Methanococcus maripaludis (strain DSM 14266 / JCM 13030 / NBRC 101832 / S2 / LL), this protein is Small ribosomal subunit protein uS7.